We begin with the raw amino-acid sequence, 666 residues long: Frizzled-3 (666 aa).

A signal peptide spans 1–22 (MAMTWIVFSLWPLTVFMGHIGG). One can recognise an FZ domain in the interval 23–136 (HSLFSCEPIT…CSRFPDCDEP (114 aa)). Over 23–205 (HSLFSCEPIT…REELSFARYF (183 aa)) the chain is Extracellular. Cystine bridges form between cysteine 28/cysteine 89, cysteine 36/cysteine 82, cysteine 73/cysteine 110, cysteine 99/cysteine 133, and cysteine 103/cysteine 127. The N-linked (GlcNAc...) asparagine glycan is linked to asparagine 42. The chain crosses the membrane as a helical span at residues 206–226 (IGLISIICLSATLFTFLTFLI). Residues 227–237 (DVTRFRYPERP) lie on the Cytoplasmic side of the membrane. The chain crosses the membrane as a helical span at residues 238–258 (IIFYAVCYMMVSLIFFIGFLL). At 259 to 288 (EDRVACNASIPAQYKASTVTQGSHNKACTM) the chain is on the extracellular side. Residue asparagine 265 is glycosylated (N-linked (GlcNAc...) asparagine). The chain crosses the membrane as a helical span at residues 289–309 (LFMILYFFTMAGSVWWVILTI). The Cytoplasmic segment spans residues 310 to 328 (TWFLAAVPKWGSEAIEKKA). The chain crosses the membrane as a helical span at residues 329 to 349 (LLFHASAWGIPGTLTIILLAM). Over 350–374 (NKIEGDNISGVCFVGLYDVDALRYF) the chain is Extracellular. Asparagine 356 is a glycosylation site (N-linked (GlcNAc...) asparagine). Residues 375-395 (VLAPLCLYVVVGVSLLLAGII) traverse the membrane as a helical segment. The Cytoplasmic portion of the chain corresponds to 396–420 (SLNRVRIEIPLEKENQDKLVKFMIR). A helical transmembrane segment spans residues 421–441 (IGVFSILYLVPLLVVIGCYFY). Over 442 to 477 (EQAYRGIWETTWIQERCREYHIPCPYQVTQMSRPDL) the chain is Extracellular. A helical transmembrane segment spans residues 478-498 (ILFLMKYLMALIVGIPSVFWV). The Cytoplasmic portion of the chain corresponds to 499–666 (GSKKTCFEWA…RVIEEDGTSA (168 aa)). Positions 502–507 (KTCFEW) match the Lys-Thr-X-X-X-Trp motif, mediates interaction with the PDZ domain of Dvl family members motif. Residues 538-666 (RDPNTPIIRK…RVIEEDGTSA (129 aa)) form a disordered region. Residues 550–565 (GTSTQGTSTHASSTQL) show a composition bias toward polar residues. The segment covering 617-638 (LTDHSRHSSSHRLNEQSRHSSI) has biased composition (basic and acidic residues). The segment covering 639–656 (RDLSNNPMTHITHGTSMN) has biased composition (polar residues).

The protein belongs to the G-protein coupled receptor Fz/Smo family. In terms of assembly, interacts with VANGL2. Ubiquitinated by ZNRF3, leading to its degradation by the proteasome. Widely expressed. Relatively high expression in the CNS, including regions of the limbic system, in kidney, pancreas, skeletal muscle, uterus and testis.

It localises to the membrane. The protein resides in the cell membrane. Its subcellular location is the cell surface. It is found in the apical cell membrane. Receptor for Wnt proteins. Most of frizzled receptors are coupled to the beta-catenin canonical signaling pathway, which leads to the activation of disheveled proteins, inhibition of GSK-3 kinase, nuclear accumulation of beta-catenin and activation of Wnt target genes. A second signaling pathway involving PKC and calcium fluxes has been seen for some family members, but it is not yet clear if it represents a distinct pathway or if it can be integrated in the canonical pathway, as PKC seems to be required for Wnt-mediated inactivation of GSK-3 kinase. Both pathways seem to involve interactions with G-proteins. Activation by Wnt5A stimulates PKC activity via a G-protein-dependent mechanism. Involved in transduction and intercellular transmission of polarity information during tissue morphogenesis and/or in differentiated tissues. Plays a role in controlling early axon growth and guidance processes necessary for the formation of a subset of central and peripheral major fiber tracts. Required for the development of major fiber tracts in the central nervous system, including: the anterior commissure, the corpus callosum, the thalamocortical, corticothalamic and nigrostriatal tracts, the corticospinal tract, the fasciculus retroflexus, the mammillothalamic tract, the medial lemniscus, and ascending fiber tracts from the spinal cord to the brain. In the peripheral nervous system, controls axon growth in distinct populations of cranial and spinal motor neurons, including the facial branchimotor nerve, the hypoglossal nerve, the phrenic nerve, and motor nerves innervating dorsal limbs. Involved in the migration of cranial neural crest cells. May also be implicated in the transmission of sensory information from the trunk and limbs to the brain. Controls commissural sensory axons guidance after midline crossing along the anterior-posterior axis in the developing spinal cord in a Wnt-dependent signaling pathway. Together with FZD6, is involved in the neural tube closure and plays a role in the regulation of the establishment of planar cell polarity (PCP), particularly in the orientation of asymmetric bundles of stereocilia on the apical faces of a subset of auditory and vestibular sensory cells located in the inner ear. Promotes neurogenesis by maintaining sympathetic neuroblasts within the cell cycle in a beta-catenin-dependent manner. The chain is Frizzled-3 (FZD3) from Homo sapiens (Human).